Consider the following 510-residue polypeptide: Lysine--tRNA ligase (510 aa).

Mg(2+) is bound by residues Glu-420 and Glu-427.

It belongs to the class-II aminoacyl-tRNA synthetase family. As to quaternary structure, homodimer. Mg(2+) serves as cofactor.

It localises to the cytoplasm. The catalysed reaction is tRNA(Lys) + L-lysine + ATP = L-lysyl-tRNA(Lys) + AMP + diphosphate. In Vibrio cholerae serotype O1 (strain ATCC 39315 / El Tor Inaba N16961), this protein is Lysine--tRNA ligase (lysS).